A 116-amino-acid polypeptide reads, in one-letter code: NADPH-dependent 7-cyano-7-deazaguanine reductase (116 aa).

Catalysis depends on Cys-31, which acts as the Thioimide intermediate. The active-site Proton donor is Asp-38. Substrate contacts are provided by residues 53–55 (VEL) and 72–73 (YE).

It belongs to the GTP cyclohydrolase I family. QueF type 1 subfamily.

The protein resides in the cytoplasm. The enzyme catalyses 7-aminomethyl-7-carbaguanine + 2 NADP(+) = 7-cyano-7-deazaguanine + 2 NADPH + 3 H(+). It functions in the pathway tRNA modification; tRNA-queuosine biosynthesis. Catalyzes the NADPH-dependent reduction of 7-cyano-7-deazaguanine (preQ0) to 7-aminomethyl-7-deazaguanine (preQ1). This is NADPH-dependent 7-cyano-7-deazaguanine reductase from Chlorobium phaeovibrioides (strain DSM 265 / 1930) (Prosthecochloris vibrioformis (strain DSM 265)).